The following is a 279-amino-acid chain: Four and a half LIM domains protein 2 (279 aa).

The C4-type zinc finger occupies 7–31 (CHHCNESLYGKKYILKEENPHCVAC). LIM zinc-binding domains are found at residues 40-92 (CEEC…CTDC), 101-153 (CQEC…CVPC), and 162-212 (CVQC…CLTC). Lys-78 is covalently cross-linked (Glycyl lysine isopeptide (Lys-Gly) (interchain with G-Cter in SUMO2)). Residues Lys-167 and Lys-220 each participate in a glycyl lysine isopeptide (Lys-Gly) (interchain with G-Cter in SUMO2) cross-link. The region spanning 221 to 275 (CAGCTNPISGLGGTKYISFEERQWHNDCFNCKKCSLSLVGRGFLTERDDILCPDC) is the LIM zinc-binding 4 domain. A Phosphoserine modification is found at Ser-238.

As to quaternary structure, interacts with ZNF638 and TTN/titin. Interacts with E4F1. Interacts with GRB7. Interacts with SIRT1 and FOXO1. Interacts with CEFIP and calcineurin. Interacts with FOXK1. As to expression, expressed in heart only (at protein level).

The protein resides in the cytoplasm. It is found in the nucleus. It localises to the myofibril. Its subcellular location is the sarcomere. The protein localises to the z line. Its function is as follows. May function as a molecular transmitter linking various signaling pathways to transcriptional regulation. Negatively regulates the transcriptional repressor E4F1 and may function in cell growth. Inhibits the transcriptional activity of FOXO1 and its apoptotic function by enhancing the interaction of FOXO1 with SIRT1 and FOXO1 deacetylation. Negatively regulates the calcineurin/NFAT signaling pathway in cardiomyocytes. The sequence is that of Four and a half LIM domains protein 2 (Fhl2) from Rattus norvegicus (Rat).